Here is a 358-residue protein sequence, read N- to C-terminus: Peptide chain release factor 1 (358 aa).

Glutamine 233 bears the N5-methylglutamine mark.

The protein belongs to the prokaryotic/mitochondrial release factor family. In terms of processing, methylated by PrmC. Methylation increases the termination efficiency of RF1.

The protein localises to the cytoplasm. Peptide chain release factor 1 directs the termination of translation in response to the peptide chain termination codons UAG and UAA. In Staphylococcus epidermidis (strain ATCC 35984 / DSM 28319 / BCRC 17069 / CCUG 31568 / BM 3577 / RP62A), this protein is Peptide chain release factor 1.